The primary structure comprises 427 residues: Histidine--tRNA ligase (427 aa).

This sequence belongs to the class-II aminoacyl-tRNA synthetase family. As to quaternary structure, homodimer.

Its subcellular location is the cytoplasm. The catalysed reaction is tRNA(His) + L-histidine + ATP = L-histidyl-tRNA(His) + AMP + diphosphate + H(+). This is Histidine--tRNA ligase from Alteromonas mediterranea (strain DSM 17117 / CIP 110805 / LMG 28347 / Deep ecotype).